Consider the following 155-residue polypeptide: uncharacterized protein (155 aa).

Positions 1-19 (MPLSKTLVQKLQQAGMAIA) are cleaved as a signal peptide.

This is an uncharacterized protein from Haemophilus influenzae (strain ATCC 51907 / DSM 11121 / KW20 / Rd).